The sequence spans 177 residues: NADH-quinone oxidoreductase subunit B (177 aa).

Residues cysteine 36, cysteine 37, cysteine 101, and cysteine 130 each contribute to the [4Fe-4S] cluster site.

It belongs to the complex I 20 kDa subunit family. As to quaternary structure, NDH-1 is composed of 14 different subunits. Subunits NuoB, C, D, E, F, and G constitute the peripheral sector of the complex. It depends on [4Fe-4S] cluster as a cofactor.

Its subcellular location is the cell inner membrane. It catalyses the reaction a quinone + NADH + 5 H(+)(in) = a quinol + NAD(+) + 4 H(+)(out). NDH-1 shuttles electrons from NADH, via FMN and iron-sulfur (Fe-S) centers, to quinones in the respiratory chain. The immediate electron acceptor for the enzyme in this species is believed to be ubiquinone. Couples the redox reaction to proton translocation (for every two electrons transferred, four hydrogen ions are translocated across the cytoplasmic membrane), and thus conserves the redox energy in a proton gradient. The protein is NADH-quinone oxidoreductase subunit B of Hydrogenobaculum sp. (strain Y04AAS1).